The primary structure comprises 698 residues: DNA ligase (698 aa).

NAD(+) contacts are provided by residues 47–51 (DAQYD), 96–97 (SL), and Glu-128. Residue Lys-130 is the N6-AMP-lysine intermediate of the active site. The NAD(+) site is built by Arg-151, Glu-186, Lys-303, and Lys-327. Residues Cys-422, Cys-425, Cys-440, and Cys-446 each contribute to the Zn(2+) site. Positions 620 to 698 (GDNLLLSNQT…EEEWIKMVNE (79 aa)) constitute a BRCT domain.

This sequence belongs to the NAD-dependent DNA ligase family. LigA subfamily. It depends on Mg(2+) as a cofactor. Requires Mn(2+) as cofactor.

It carries out the reaction NAD(+) + (deoxyribonucleotide)n-3'-hydroxyl + 5'-phospho-(deoxyribonucleotide)m = (deoxyribonucleotide)n+m + AMP + beta-nicotinamide D-nucleotide.. Its function is as follows. DNA ligase that catalyzes the formation of phosphodiester linkages between 5'-phosphoryl and 3'-hydroxyl groups in double-stranded DNA using NAD as a coenzyme and as the energy source for the reaction. It is essential for DNA replication and repair of damaged DNA. The protein is DNA ligase of Orientia tsutsugamushi (strain Boryong) (Rickettsia tsutsugamushi).